We begin with the raw amino-acid sequence, 194 residues long: Large ribosomal subunit protein bL9c (194 aa).

The N-terminal 39 residues, 1 to 39, are a transit peptide targeting the chloroplast; it reads MASSTLSSLSSTPLQHSFAANLKTCSQFPNKSSGFMVFA.

This sequence belongs to the bacterial ribosomal protein bL9 family. As to quaternary structure, part of the 50S ribosomal subunit.

The protein resides in the plastid. It localises to the chloroplast. Binds to the 23S rRNA. The chain is Large ribosomal subunit protein bL9c (RPL9) from Pisum sativum (Garden pea).